The sequence spans 209 residues: Large ribosomal subunit protein uL3 (209 aa).

The tract at residues Arg125–Pro148 is disordered.

The protein belongs to the universal ribosomal protein uL3 family. In terms of assembly, part of the 50S ribosomal subunit. Forms a cluster with proteins L14 and L19.

In terms of biological role, one of the primary rRNA binding proteins, it binds directly near the 3'-end of the 23S rRNA, where it nucleates assembly of the 50S subunit. This is Large ribosomal subunit protein uL3 from Lysinibacillus sphaericus (strain C3-41).